Consider the following 434-residue polypeptide: CinA-like protein (434 aa).

It belongs to the CinA family.

The chain is CinA-like protein from Mycolicibacterium paratuberculosis (strain ATCC BAA-968 / K-10) (Mycobacterium paratuberculosis).